The chain runs to 915 residues: Probable dipeptidyl-aminopeptidase B (915 aa).

Residues 1–82 form a disordered region; sequence MAPPFTDDPE…GAFLGPPGVP (82 aa). The Cytoplasmic portion of the chain corresponds to 1 to 94; it reads MAPPFTDDPE…RQPMDRGFRR (94 aa). The span at 15-32 shows a compositional bias: low complexity; that stretch reads STSRLSQDSLSSVSTTSL. The segment covering 36 to 62 has biased composition (basic and acidic residues); sequence RIQEEMDRDPSASRSARRDLLPATKDE. The helical; Signal-anchor for type II membrane protein transmembrane segment at 95–115 threads the bilayer; sequence ILIIIGAVFVGAWLAGLGIFV. Over 116-915 the chain is Vacuolar; that stretch reads LSGSYKHESD…IDTKKRRHVS (800 aa). N-linked (GlcNAc...) asparagine glycans are attached at residues asparagine 355 and asparagine 577. Catalysis depends on serine 760, which acts as the Charge relay system. A glycan (N-linked (GlcNAc...) asparagine) is linked at asparagine 819. Catalysis depends on charge relay system residues aspartate 837 and histidine 870.

Belongs to the peptidase S9B family.

It is found in the vacuole membrane. The enzyme catalyses Release of an N-terminal dipeptide, Xaa-Yaa-|-Zaa-, from a polypeptide, preferentially when Yaa is Pro, provided Zaa is neither Pro nor hydroxyproline.. Functionally, type IV dipeptidyl-peptidase which removes N-terminal dipeptides sequentially from polypeptides having unsubstituted N-termini provided that the penultimate residue is proline. The chain is Probable dipeptidyl-aminopeptidase B (DAPB) from Metarhizium robertsii (strain ARSEF 23 / ATCC MYA-3075) (Metarhizium anisopliae (strain ARSEF 23)).